We begin with the raw amino-acid sequence, 341 residues long: Porin-like protein L (341 aa).

Positions 1–21 (MNKKLIALAVAAASISSVATA) are cleaved as a signal peptide.

It belongs to the Gram-negative porin family. In terms of assembly, homotrimer.

It is found in the cell outer membrane. In terms of biological role, forms pores that allow passive diffusion of small molecules across the outer membrane. This is Porin-like protein L (ompL) from Photobacterium profundum (strain SS9).